The chain runs to 891 residues: Mating-type protein A-alpha Z3 (891 aa).

The homeobox; TALE-type DNA-binding region spans 111–189; that stretch reads EWQENMPPVP…AARIRIGWTH (79 aa). A compositionally biased stretch (basic and acidic residues) spans 331-360; the sequence is AAHEKRQQARREQRQAKNERDAAQMREEQR. Disordered regions lie at residues 331 to 592, 606 to 671, 779 to 812, and 836 to 861; these read AAHE…VNWD, YLDS…ASET, SILS…VEPS, and PKKD…SPDT. Acidic residues-rich tracts occupy residues 369–400 and 427–457; these read SSDD…SDSD and ADDE…EEDT. 2 stretches are compositionally biased toward low complexity: residues 542 to 559 and 612 to 650; these read PSKT…KSST and SSRP…SSVS. Positions 651 to 660 are enriched in polar residues; that stretch reads TCETVGTDSS. The span at 841-850 shows a compositional bias: basic and acidic residues; it reads RYAERAERRA.

It belongs to the TALE/M-ATYP homeobox family.

The protein resides in the nucleus. Its function is as follows. Specifies A-alpha-3 mating-type. May regulate the expression of genes specific to the homokaryotic cell type. The polypeptide is Mating-type protein A-alpha Z3 (Schizophyllum commune (Split gill fungus)).